The following is a 2327-amino-acid chain: Acetyl-CoA carboxylase 2 (2327 aa).

A disordered region spans residues 1–62; it reads MTSTHVATLG…NGGVSDSKKL (62 aa). The region spanning 134–641 is the Biotin carboxylation domain; it reads PIHSVLVANN…HTGWLDTRIA (508 aa). In terms of domain architecture, ATP-grasp spans 287 to 481; sequence ECCLDSIPDE…AAQVAVGMGI (195 aa). 313-370 lines the ATP pocket; it reads CQVVGYPAMIKASWGGGGKGIRKVHNDDEVRTLFKQVQGEVPGSPIFIMRLAAQSRHL. Mg(2+) contacts are provided by E436, E450, and N452. Residues E436, E450, and N452 each coordinate Mn(2+). R454 is a catalytic residue. The region spanning 768–842 is the Biotinyl-binding domain; that stretch reads LQNDHDPSKL…QAGDLIARLD (75 aa). Residue K809 is modified to N6-biotinyllysine. Positions 1568-1909 constitute a CoA carboxyltransferase N-terminal domain; the sequence is PYQPLSVIDL…YIGGPLPVTT (342 aa). Positions 1568 to 2227 are carboxyltransferase; it reads PYQPLSVIDL…EDVLAKEIRA (660 aa). R1818, K2119, and R2121 together coordinate CoA. One can recognise a CoA carboxyltransferase C-terminal domain in the interval 1913-2227; the sequence is PPDRPVAYIP…EDVLAKEIRA (315 aa).

In terms of assembly, homodimer. Biotin serves as cofactor. Requires Mg(2+) as cofactor. It depends on Mn(2+) as a cofactor.

Its subcellular location is the cytoplasm. It is found in the cytosol. The enzyme catalyses hydrogencarbonate + acetyl-CoA + ATP = malonyl-CoA + ADP + phosphate + H(+). It carries out the reaction N(6)-biotinyl-L-lysyl-[protein] + hydrogencarbonate + ATP = N(6)-carboxybiotinyl-L-lysyl-[protein] + ADP + phosphate + H(+). The protein operates within lipid metabolism; malonyl-CoA biosynthesis; malonyl-CoA from acetyl-CoA: step 1/1. Its function is as follows. Multifunctional enzyme that catalyzes the carboxylation of acetyl-CoA, forming malonyl-CoA, which is used in the plastid for fatty acid synthesis and in the cytosol in various biosynthetic pathways including fatty acid elongation. This chain is Acetyl-CoA carboxylase 2 (ACC2), found in Oryza sativa subsp. japonica (Rice).